We begin with the raw amino-acid sequence, 549 residues long: Oxygen-dependent choline dehydrogenase (549 aa).

Residue 4 to 33 (DFVIIGSGSAGSAMAYRLSENGRYSVIVIE) participates in FAD binding. His465 functions as the Proton acceptor in the catalytic mechanism.

It belongs to the GMC oxidoreductase family. Requires FAD as cofactor.

It catalyses the reaction choline + A = betaine aldehyde + AH2. It carries out the reaction betaine aldehyde + NAD(+) + H2O = glycine betaine + NADH + 2 H(+). The protein operates within amine and polyamine biosynthesis; betaine biosynthesis via choline pathway; betaine aldehyde from choline (cytochrome c reductase route): step 1/1. Functionally, involved in the biosynthesis of the osmoprotectant glycine betaine. Catalyzes the oxidation of choline to betaine aldehyde and betaine aldehyde to glycine betaine at the same rate. This is Oxygen-dependent choline dehydrogenase from Brucella suis biovar 1 (strain 1330).